A 429-amino-acid chain; its full sequence is E3 ubiquitin-protein ligase ZNRF4 (429 aa).

The first 27 residues, Met1–Ala27, serve as a signal peptide directing secretion. Residues Val28–Pro250 are Lumenal-facing. Residues Pro30–Gln64 form a disordered region. The span at Pro37–Pro49 shows a compositional bias: basic residues. The N-linked (GlcNAc...) asparagine glycan is linked to Asn152. A PA domain is found at Asn152–Arg223. A helical membrane pass occupies residues Val251–Val271. The Cytoplasmic portion of the chain corresponds to Leu272–Gln429. An RING-type; atypical zinc finger spans residues Cys309–Lys352. 2 disordered regions span residues Thr358–Pro381 and Thr409–Gln429. Residues Thr409 to Ser420 show a composition bias toward polar residues.

As to quaternary structure, interacts with CANX.

It localises to the endoplasmic reticulum membrane. It carries out the reaction S-ubiquitinyl-[E2 ubiquitin-conjugating enzyme]-L-cysteine + [acceptor protein]-L-lysine = [E2 ubiquitin-conjugating enzyme]-L-cysteine + N(6)-ubiquitinyl-[acceptor protein]-L-lysine.. It functions in the pathway protein modification; protein ubiquitination. E3 ubiquitin-protein ligase that acts as a negative regulator of NOD2 signaling by mediating ubiquitination and degradation of RIPK2. Also catalyzes ubiquitination and proteasomal degradation of CANX within the endoplasmic reticulum. Could have a role in spermatogenesis. In Macaca fascicularis (Crab-eating macaque), this protein is E3 ubiquitin-protein ligase ZNRF4 (ZNRF4).